A 137-amino-acid chain; its full sequence is Small ribosomal subunit protein uS12 (137 aa).

The interval 1 to 55 (MPTINQLVRKPRQSKSKKSDSPALNRNFNSKKKKFTDLNSPQKRGVCTRVGTMTP) is disordered. Residue Asp-102 is modified to 3-methylthioaspartic acid. Residues 118–137 (SGVDGRRQGRSLYGTKKPKK) are disordered.

It belongs to the universal ribosomal protein uS12 family. Part of the 30S ribosomal subunit. Contacts proteins S8 and S17. May interact with IF1 in the 30S initiation complex.

Its function is as follows. With S4 and S5 plays an important role in translational accuracy. In terms of biological role, interacts with and stabilizes bases of the 16S rRNA that are involved in tRNA selection in the A site and with the mRNA backbone. Located at the interface of the 30S and 50S subunits, it traverses the body of the 30S subunit contacting proteins on the other side and probably holding the rRNA structure together. The combined cluster of proteins S8, S12 and S17 appears to hold together the shoulder and platform of the 30S subunit. The polypeptide is Small ribosomal subunit protein uS12 (Staphylococcus saprophyticus subsp. saprophyticus (strain ATCC 15305 / DSM 20229 / NCIMB 8711 / NCTC 7292 / S-41)).